The chain runs to 345 residues: Anthranilate phosphoribosyltransferase (345 aa).

Residues G87, 90–91 (GD), T95, 97–100 (NAST), 115–123 (KHGNRSFSS), and S127 contribute to the 5-phospho-alpha-D-ribose 1-diphosphate site. G87 contributes to the anthranilate binding site. S99 lines the Mg(2+) pocket. Residue N118 coordinates anthranilate. Position 173 (R173) interacts with anthranilate. Residues D232 and E233 each coordinate Mg(2+).

Belongs to the anthranilate phosphoribosyltransferase family. As to quaternary structure, homodimer. Requires Mg(2+) as cofactor.

The enzyme catalyses N-(5-phospho-beta-D-ribosyl)anthranilate + diphosphate = 5-phospho-alpha-D-ribose 1-diphosphate + anthranilate. The protein operates within amino-acid biosynthesis; L-tryptophan biosynthesis; L-tryptophan from chorismate: step 2/5. Catalyzes the transfer of the phosphoribosyl group of 5-phosphorylribose-1-pyrophosphate (PRPP) to anthranilate to yield N-(5'-phosphoribosyl)-anthranilate (PRA). This Aeropyrum pernix (strain ATCC 700893 / DSM 11879 / JCM 9820 / NBRC 100138 / K1) protein is Anthranilate phosphoribosyltransferase.